A 203-amino-acid polypeptide reads, in one-letter code: MGLEVQRPLMEAWYMDDSAEDQRMPHHRNPPEYVSLKKLAELGILHWVLDADNYETDPDLKHIRKERGYSYEDFVDVSPEALPNYETKIKNFYEEHIHTDEEIRYCLDGSGYFDVRDPEDRWIRIWVHKGDMIVLPAGCYHRFSLDANNYLKAMRLFVGEPIWTPYNRPQDEHPVRKEYINLFLKPHLDKSDLSLATQNAETV.

Residues histidine 96, histidine 98, glutamate 102, and histidine 141 each contribute to the Fe(2+) site. Histidine 96, histidine 98, glutamate 102, and histidine 141 together coordinate Ni(2+).

This sequence belongs to the acireductone dioxygenase (ARD) family. The cofactor is Fe(2+). Requires Ni(2+) as cofactor.

The protein resides in the cytoplasm. Its subcellular location is the nucleus. The catalysed reaction is 1,2-dihydroxy-5-(methylsulfanyl)pent-1-en-3-one + O2 = 4-methylsulfanyl-2-oxobutanoate + formate + 2 H(+). It carries out the reaction 1,2-dihydroxy-5-(methylsulfanyl)pent-1-en-3-one + O2 = 3-(methylsulfanyl)propanoate + CO + formate + 2 H(+). It participates in amino-acid biosynthesis; L-methionine biosynthesis via salvage pathway; L-methionine from S-methyl-5-thio-alpha-D-ribose 1-phosphate: step 5/6. Functionally, catalyzes 2 different reactions between oxygen and the acireductone 1,2-dihydroxy-3-keto-5-methylthiopentene (DHK-MTPene) depending upon the metal bound in the active site. Fe-containing acireductone dioxygenase (Fe-ARD) produces formate and 2-keto-4-methylthiobutyrate (KMTB), the alpha-ketoacid precursor of methionine in the methionine recycle pathway. Ni-containing acireductone dioxygenase (Ni-ARD) produces methylthiopropionate, carbon monoxide and formate, and does not lie on the methionine recycle pathway. The chain is Acireductone dioxygenase 3 from Physcomitrium patens (Spreading-leaved earth moss).